Here is a 212-residue protein sequence, read N- to C-terminus: Phosphoenolpyruvate guanylyltransferase (212 aa).

Thr139, Gly155, and Ser158 together coordinate phosphoenolpyruvate.

The protein belongs to the CofC family.

It carries out the reaction phosphoenolpyruvate + GTP + H(+) = enolpyruvoyl-2-diphospho-5'-guanosine + diphosphate. Its pathway is cofactor biosynthesis; coenzyme F420 biosynthesis. In terms of biological role, guanylyltransferase that catalyzes the activation of phosphoenolpyruvate (PEP) as enolpyruvoyl-2-diphospho-5'-guanosine, via the condensation of PEP with GTP. It is involved in the biosynthesis of coenzyme F420, a hydride carrier cofactor. The sequence is that of Phosphoenolpyruvate guanylyltransferase from Streptomyces coelicolor (strain ATCC BAA-471 / A3(2) / M145).